Consider the following 315-residue polypeptide: Protein FRA10AC1 homolog (315 aa).

The residue at position 1 (Met1) is an N-acetylmethionine. The disordered stretch occupies residues 1–28 (MHGHGGYDSDFSDDEQGGGSSKKRKKTV). Phosphoserine is present on residues Ser9 and Ser12. Lys36 is subject to N6-acetyllysine. A compositionally biased stretch (basic residues) spans 225 to 235 (KEIKSTKKKSK). The segment at 225 to 308 (KEIKSTKKKS…EKSQEEEFDD (84 aa)) is disordered. Composition is skewed to basic and acidic residues over residues 236–245 (TTPECDESPR) and 255–278 (EASK…NRNA). Phosphoserine is present on residues Ser283 and Ser285.

In terms of assembly, interacts with ESS2.

It is found in the nucleus. Its function is as follows. May be involved in pre-mRNA splicing. In Mus musculus (Mouse), this protein is Protein FRA10AC1 homolog (Fra10ac1).